A 106-amino-acid polypeptide reads, in one-letter code: Nucleoid-associated protein BBta_7345 (106 aa).

The protein belongs to the YbaB/EbfC family. As to quaternary structure, homodimer.

It localises to the cytoplasm. The protein localises to the nucleoid. In terms of biological role, binds to DNA and alters its conformation. May be involved in regulation of gene expression, nucleoid organization and DNA protection. This chain is Nucleoid-associated protein BBta_7345, found in Bradyrhizobium sp. (strain BTAi1 / ATCC BAA-1182).